The sequence spans 726 residues: Probable dipeptidyl-peptidase 5 (726 aa).

The first 19 residues, 1 to 19 (MAAAKWLIASLAFASSGLA), serve as a signal peptide directing secretion. N-linked (GlcNAc...) asparagine glycans are attached at residues asparagine 96 and asparagine 252. The segment at 269–291 (AEPINKRNGPRTPQGIEGASSSP) is disordered. A glycan (N-linked (GlcNAc...) asparagine) is linked at asparagine 485. Serine 558 (charge relay system) is an active-site residue. Asparagine 605 is a glycosylation site (N-linked (GlcNAc...) asparagine). Residues aspartate 641 and histidine 673 each act as charge relay system in the active site. Asparagine 699 carries an N-linked (GlcNAc...) asparagine glycan.

Belongs to the peptidase S9C family.

Its subcellular location is the secreted. Extracellular dipeptidyl-peptidase which removes N-terminal dipeptides sequentially from polypeptides having unsubstituted N-termini. Contributes to pathogenicity. This chain is Probable dipeptidyl-peptidase 5 (DPP5), found in Arthroderma benhamiae (strain ATCC MYA-4681 / CBS 112371) (Trichophyton mentagrophytes).